We begin with the raw amino-acid sequence, 840 residues long: MTEELKNRLLSILKFVFAAVLFIAVVATLYHELAHINFKQTLEAFSKINRWYLVGLFICGGSAMILLSLYDLILVKGLKLDIPLIRVFKISYIINALNAIVGFGGFIGAGFRAFIYKNYTTDRKKLVHAISIILISMLMGLSLLSILVVLHIFDASHIINKVSWVRWILYVVALFLPLFIAYTMINPIDRNNKYLGVYCTLVSSFEWLAAATVLYLSTVIVDINIAFTTVIGIFIIAALSGLVSFIPGGFGAFDLVVLLGLKSLGVPEEKVLLALLLYRFAYYFVPVIIALILSTFEFGSSARKYFEESKYFVPARDVTSFLFSYQKDIIAKIPSFALATLVLITSFVFFINNITIVYDGLYDDHHFAYYIMLSVHTSACLLLLINVRGVFKQSRRAILFVMISLVLIFSATIYTYASLILLSWILLIFILLILAYRRSKVMKRPFRLKRLIFTIILSMLVLYVNHFIISETLYALDIYHIEMDTSLLKYYFWLTILVVVILVGIVAWLLGSRYTRPHQLEDLSRCKSIIETYGGNYLSHLIYSGDKDVFMHEAQQAFLMYRYKGNALVVLGDPIGDTKAFQSLLIDFYNYGEKLGYDIIFYQVSDRFMPLYHNFGNQFFKLGEEAIIDLTQFTTSGKKRRGFRATLNKFDDLNIQFEILEPPFSKDLIFQLKQVSNQWLDGRNEMHFSVGQFTEEYLQQAPIGIMKNEEGKVIAFCTLMPTYYNEAISVDLIRWLPDLDLPLMDGLYLHMLLWGKDKGYKAFNMGMATLSNVGQLNYSYPRERVAGRVFEHFNGLYRFQGLRKYKEKYSPNWEPRFLVYRKDSSLWYSMLKVMRVIRHK.

The Cytoplasmic portion of the chain corresponds to 1–8 (MTEELKNR). A helical transmembrane segment spans residues 9 to 29 (LLSILKFVFAAVLFIAVVATL). Residues 30-52 (YHELAHINFKQTLEAFSKINRWY) lie on the Extracellular side of the membrane. Residues 53-73 (LVGLFICGGSAMILLSLYDLI) form a helical membrane-spanning segment. Topologically, residues 74-89 (LVKGLKLDIPLIRVFK) are cytoplasmic. Residues 90–110 (ISYIINALNAIVGFGGFIGAG) form a helical membrane-spanning segment. The Extracellular portion of the chain corresponds to 111–129 (FRAFIYKNYTTDRKKLVHA). The chain crosses the membrane as a helical span at residues 130–150 (ISIILISMLMGLSLLSILVVL). At 151–167 (HIFDASHIINKVSWVRW) the chain is on the cytoplasmic side. A helical transmembrane segment spans residues 168–188 (ILYVVALFLPLFIAYTMINPI). Residues 189–193 (DRNNK) lie on the Extracellular side of the membrane. A helical transmembrane segment spans residues 194-216 (YLGVYCTLVSSFEWLAAATVLYL). Topologically, residues 217–229 (STVIVDINIAFTT) are cytoplasmic. A helical membrane pass occupies residues 230-250 (VIGIFIIAALSGLVSFIPGGF). The Extracellular portion of the chain corresponds to 251-271 (GAFDLVVLLGLKSLGVPEEKV). A helical membrane pass occupies residues 272–292 (LLALLLYRFAYYFVPVIIALI). Residues 293 to 335 (LSTFEFGSSARKYFEESKYFVPARDVTSFLFSYQKDIIAKIPS) lie on the Cytoplasmic side of the membrane. The chain crosses the membrane as a helical span at residues 336–356 (FALATLVLITSFVFFINNITI). The Extracellular portion of the chain corresponds to 357–366 (VYDGLYDDHH). Residues 367–387 (FAYYIMLSVHTSACLLLLINV) traverse the membrane as a helical segment. The Cytoplasmic segment spans residues 388 to 394 (RGVFKQS). The next 2 helical transmembrane spans lie at 395–415 (RRAI…TIYT) and 416–436 (YASL…ILAY). The Cytoplasmic segment spans residues 437–450 (RRSKVMKRPFRLKR). The chain crosses the membrane as a helical span at residues 451 to 471 (LIFTIILSMLVLYVNHFIISE). Residues 472 to 490 (TLYALDIYHIEMDTSLLKY) lie on the Extracellular side of the membrane. The chain crosses the membrane as a helical span at residues 491 to 511 (YFWLTILVVVILVGIVAWLLG). Residues 512 to 840 (SRYTRPHQLE…LKVMRVIRHK (329 aa)) lie on the Cytoplasmic side of the membrane.

It belongs to the LPG synthase family.

The protein localises to the cell membrane. It catalyses the reaction L-lysyl-tRNA(Lys) + a 1,2-diacyl-sn-glycero-3-phospho-(1'-sn-glycerol) = a 1,2-diacyl-sn-glycero-3-phospho-1'-(3'-O-L-lysyl)-sn-glycerol + tRNA(Lys). Catalyzes the transfer of a lysyl group from L-lysyl-tRNA(Lys) to membrane-bound phosphatidylglycerol (PG), which produces lysylphosphatidylglycerol (LPG), a major component of the bacterial membrane with a positive net charge. LPG synthesis contributes to bacterial virulence as it is involved in the resistance mechanism against cationic antimicrobial peptides (CAMP) produces by the host's immune system (defensins, cathelicidins) and by the competing microorganisms (bacteriocins). In fact, the modification of anionic phosphatidylglycerol with positively charged L-lysine results in repulsion of the peptides. The polypeptide is Phosphatidylglycerol lysyltransferase (mprF) (Staphylococcus haemolyticus (strain JCSC1435)).